Here is a 403-residue protein sequence, read N- to C-terminus: Probable tRNA sulfurtransferase (403 aa).

The THUMP domain occupies 60-165 (QLAEERLKPI…KEGVFLSCRT (106 aa)). ATP is bound by residues 183 to 184 (ML), 208 to 209 (HF), arginine 265, glycine 287, and glutamine 296.

This sequence belongs to the ThiI family.

Its subcellular location is the cytoplasm. It carries out the reaction [ThiI sulfur-carrier protein]-S-sulfanyl-L-cysteine + a uridine in tRNA + 2 reduced [2Fe-2S]-[ferredoxin] + ATP + H(+) = [ThiI sulfur-carrier protein]-L-cysteine + a 4-thiouridine in tRNA + 2 oxidized [2Fe-2S]-[ferredoxin] + AMP + diphosphate. It catalyses the reaction [ThiS sulfur-carrier protein]-C-terminal Gly-Gly-AMP + S-sulfanyl-L-cysteinyl-[cysteine desulfurase] + AH2 = [ThiS sulfur-carrier protein]-C-terminal-Gly-aminoethanethioate + L-cysteinyl-[cysteine desulfurase] + A + AMP + 2 H(+). It functions in the pathway cofactor biosynthesis; thiamine diphosphate biosynthesis. Its function is as follows. Catalyzes the ATP-dependent transfer of a sulfur to tRNA to produce 4-thiouridine in position 8 of tRNAs, which functions as a near-UV photosensor. Also catalyzes the transfer of sulfur to the sulfur carrier protein ThiS, forming ThiS-thiocarboxylate. This is a step in the synthesis of thiazole, in the thiamine biosynthesis pathway. The sulfur is donated as persulfide by IscS. This Listeria monocytogenes serovar 1/2a (strain ATCC BAA-679 / EGD-e) protein is Probable tRNA sulfurtransferase.